The sequence spans 241 residues: Proteasome subunit alpha (241 aa).

Belongs to the peptidase T1A family. In terms of assembly, the 20S proteasome core is composed of 14 alpha and 14 beta subunits that assemble into four stacked heptameric rings, resulting in a barrel-shaped structure. The two inner rings, each composed of seven catalytic beta subunits, are sandwiched by two outer rings, each composed of seven alpha subunits. The catalytic chamber with the active sites is on the inside of the barrel. Has a gated structure, the ends of the cylinder being occluded by the N-termini of the alpha-subunits. Is capped by the proteasome-associated ATPase, ARC.

It localises to the cytoplasm. Its pathway is protein degradation; proteasomal Pup-dependent pathway. The formation of the proteasomal ATPase ARC-20S proteasome complex, likely via the docking of the C-termini of ARC into the intersubunit pockets in the alpha-rings, may trigger opening of the gate for substrate entry. Interconversion between the open-gate and close-gate conformations leads to a dynamic regulation of the 20S proteasome proteolysis activity. Functionally, component of the proteasome core, a large protease complex with broad specificity involved in protein degradation. The polypeptide is Proteasome subunit alpha (Parafrankia sp. (strain EAN1pec)).